Consider the following 526-residue polypeptide: Bifunctional purine biosynthesis protein PurH (526 aa).

Positions methionine 1–threonine 147 constitute an MGS-like domain.

This sequence belongs to the PurH family.

It catalyses the reaction (6R)-10-formyltetrahydrofolate + 5-amino-1-(5-phospho-beta-D-ribosyl)imidazole-4-carboxamide = 5-formamido-1-(5-phospho-D-ribosyl)imidazole-4-carboxamide + (6S)-5,6,7,8-tetrahydrofolate. The catalysed reaction is IMP + H2O = 5-formamido-1-(5-phospho-D-ribosyl)imidazole-4-carboxamide. Its pathway is purine metabolism; IMP biosynthesis via de novo pathway; 5-formamido-1-(5-phospho-D-ribosyl)imidazole-4-carboxamide from 5-amino-1-(5-phospho-D-ribosyl)imidazole-4-carboxamide (10-formyl THF route): step 1/1. It participates in purine metabolism; IMP biosynthesis via de novo pathway; IMP from 5-formamido-1-(5-phospho-D-ribosyl)imidazole-4-carboxamide: step 1/1. This Neisseria gonorrhoeae (strain ATCC 700825 / FA 1090) protein is Bifunctional purine biosynthesis protein PurH.